The primary structure comprises 582 residues: ATP-dependent lipid A-core flippase (582 aa).

5 helical membrane passes run 25–45 (AGLI…TFML), 69–89 (LAVI…SYCI), 137–159 (ASSS…LFIM), 253–273 (PIIQ…ASFP), and 275–295 (VMET…IALM). Residues 28 to 310 (IVAAIALILN…LTNVNTQFQR (283 aa)) form the ABC transmembrane type-1 domain. In terms of domain architecture, ABC transporter spans 342-578 (IEFRHVTFYY…QGVYAQLNRM (237 aa)). 376 to 383 (GRSGSGKS) contacts ATP.

It belongs to the ABC transporter superfamily. Lipid exporter (TC 3.A.1.106) family. As to quaternary structure, homodimer.

The protein resides in the cell inner membrane. It carries out the reaction ATP + H2O + lipid A-core oligosaccharideSide 1 = ADP + phosphate + lipid A-core oligosaccharideSide 2.. Involved in lipopolysaccharide (LPS) biosynthesis. Translocates lipid A-core from the inner to the outer leaflet of the inner membrane. Transmembrane domains (TMD) form a pore in the inner membrane and the ATP-binding domain (NBD) is responsible for energy generation. The polypeptide is ATP-dependent lipid A-core flippase (Yersinia pestis bv. Antiqua (strain Antiqua)).